We begin with the raw amino-acid sequence, 284 residues long: Acetylglutamate kinase (284 aa).

Residues 54 to 55 (GG), Arg76, and Asn179 each bind substrate.

This sequence belongs to the acetylglutamate kinase family. ArgB subfamily.

Its subcellular location is the cytoplasm. It carries out the reaction N-acetyl-L-glutamate + ATP = N-acetyl-L-glutamyl 5-phosphate + ADP. It functions in the pathway amino-acid biosynthesis; L-arginine biosynthesis; N(2)-acetyl-L-ornithine from L-glutamate: step 2/4. Functionally, catalyzes the ATP-dependent phosphorylation of N-acetyl-L-glutamate. This Sorangium cellulosum (strain So ce56) (Polyangium cellulosum (strain So ce56)) protein is Acetylglutamate kinase.